A 269-amino-acid chain; its full sequence is Phosphate import ATP-binding protein PstB (269 aa).

An ABC transporter domain is found at 22 to 264 (AEVRDLNFYY…PVQQKTADYV (243 aa)). 54–61 (GPSGCGKT) is an ATP binding site.

It belongs to the ABC transporter superfamily. Phosphate importer (TC 3.A.1.7) family. The complex is composed of two ATP-binding proteins (PstB), two transmembrane proteins (PstC and PstA) and a solute-binding protein (PstS).

It is found in the cell inner membrane. The enzyme catalyses phosphate(out) + ATP + H2O = ADP + 2 phosphate(in) + H(+). Its function is as follows. Part of the ABC transporter complex PstSACB involved in phosphate import. Responsible for energy coupling to the transport system. This Thermosynechococcus vestitus (strain NIES-2133 / IAM M-273 / BP-1) protein is Phosphate import ATP-binding protein PstB.